Here is a 282-residue protein sequence, read N- to C-terminus: Shikimate dehydrogenase (NADP(+)) (282 aa).

Shikimate is bound by residues 18–20 and Thr65; that span reads SRS. The active-site Proton acceptor is the Lys69. Glu81 is an NADP(+) binding site. Residues Asn90 and Asp105 each contribute to the shikimate site. NADP(+) contacts are provided by residues 130–134, 154–159, and Met222; these read GAGGA and NRTPAR. Tyr224 is a shikimate binding site. Residue Gly245 coordinates NADP(+).

Belongs to the shikimate dehydrogenase family. In terms of assembly, homodimer.

The catalysed reaction is shikimate + NADP(+) = 3-dehydroshikimate + NADPH + H(+). The protein operates within metabolic intermediate biosynthesis; chorismate biosynthesis; chorismate from D-erythrose 4-phosphate and phosphoenolpyruvate: step 4/7. Its function is as follows. Involved in the biosynthesis of the chorismate, which leads to the biosynthesis of aromatic amino acids. Catalyzes the reversible NADPH linked reduction of 3-dehydroshikimate (DHSA) to yield shikimate (SA). This chain is Shikimate dehydrogenase (NADP(+)), found in Acidovorax sp. (strain JS42).